Consider the following 505-residue polypeptide: ATP synthase subunit alpha, chloroplastic (505 aa).

172–179 (GDRQTGKT) contributes to the ATP binding site.

Belongs to the ATPase alpha/beta chains family. In terms of assembly, F-type ATPases have 2 components, CF(1) - the catalytic core - and CF(0) - the membrane proton channel. CF(1) has five subunits: alpha(3), beta(3), gamma(1), delta(1), epsilon(1). CF(0) has four main subunits: a, b, b' and c.

Its subcellular location is the plastid. It localises to the chloroplast thylakoid membrane. The enzyme catalyses ATP + H2O + 4 H(+)(in) = ADP + phosphate + 5 H(+)(out). In terms of biological role, produces ATP from ADP in the presence of a proton gradient across the membrane. The alpha chain is a regulatory subunit. The chain is ATP synthase subunit alpha, chloroplastic from Antithamnion sp. (Red alga).